The chain runs to 333 residues: Galactinol synthase 5 (333 aa).

K103 is an active-site residue. D119, D121, and H257 together coordinate Mn(2+).

This sequence belongs to the glycosyltransferase 8 family. Galactosyltransferase subfamily. It depends on a divalent metal cation as a cofactor.

Its subcellular location is the cytoplasm. The catalysed reaction is myo-inositol + UDP-alpha-D-galactose = alpha-D-galactosyl-(1-&gt;3)-1D-myo-inositol + UDP + H(+). Galactinol synthase involved in the biosynthesis of raffinose family oligosaccharides (RFOs) that function as osmoprotectants. May promote plant stress tolerance. The chain is Galactinol synthase 5 (GOLS5) from Arabidopsis thaliana (Mouse-ear cress).